Here is a 188-residue protein sequence, read N- to C-terminus: Elongation factor P (188 aa).

This sequence belongs to the elongation factor P family.

Its subcellular location is the cytoplasm. It participates in protein biosynthesis; polypeptide chain elongation. Involved in peptide bond synthesis. Stimulates efficient translation and peptide-bond synthesis on native or reconstituted 70S ribosomes in vitro. Probably functions indirectly by altering the affinity of the ribosome for aminoacyl-tRNA, thus increasing their reactivity as acceptors for peptidyl transferase. The polypeptide is Elongation factor P (Aeromonas hydrophila subsp. hydrophila (strain ATCC 7966 / DSM 30187 / BCRC 13018 / CCUG 14551 / JCM 1027 / KCTC 2358 / NCIMB 9240 / NCTC 8049)).